The sequence spans 279 residues: Complement component 1 Q subcomponent-binding protein, mitochondrial (279 aa).

The transit peptide at 1–71 (MLPLLRCVPR…PVPCACGCGA (71 aa)) directs the protein to the mitochondrion. The C1q binding stretch occupies residues 74–91 (TEGDKAFVEFLTDEIKEE). N6-acetyllysine is present on residues K89 and K92. The segment at 134-162 (NNSIPPTFDGEEEPSQGQKAEEQEPELTS) is disordered. The segment at 166-210 (FVVEVTKTDGKKTLVLDCHYPEDEIGHEDEAESDIFSIKEVSFQT) is interaction with MAVS. Y185 is subject to Phosphotyrosine. Phosphoserine occurs at positions 198 and 202. Position 211 is a phosphothreonine (T211).

The protein belongs to the MAM33 family. Homotrimer; three monomers form a donut-shaped structure with an unusually asymmetric charge distribution on the surface. Interacts with CDK13, HRK, VTN, NFYB, ADRA1B, FOXC1, DDX21, DDX50, NCL, SRSF1 and SRSF9. Interacts with CD93; the association may represent a cell surface C1q receptor. Interacts with KRT1; the association represents a cell surface kininogen receptor. Interacts with CD209; the interaction is indicative for a C1q:C1QBP:CD209 signaling complex. Interacts with FBL and RRP1; the respective interactions with C1QBP are competitive. Probably associates with the mitoribosome. Interacts with MAVS; the interaction occurs upon viral transfection. Interacts with PPIF. Interacts with U2AF1L4. Interacts with PLEKHN1. Interacts with VGF-derived peptide TLQP-21. Interacts with MRE11 and RAD50; forming the MRC (MRE11-RAD50-C1QBP) complex that inhibits the activity of MRE11. In terms of tissue distribution, ubiquitous.

Its subcellular location is the mitochondrion matrix. The protein resides in the nucleus. The protein localises to the cell membrane. It is found in the secreted. It localises to the cytoplasm. Its subcellular location is the nucleolus. Its function is as follows. Multifunctional and multicompartmental protein involved in inflammation and infection processes, ribosome biogenesis, protein synthesis in mitochondria, regulation of apoptosis, transcriptional regulation and pre-mRNA splicing. At the cell surface is thought to act as an endothelial receptor for plasma proteins of the complement and kallikrein-kinin cascades. Putative receptor for C1q; specifically binds to the globular 'heads' of C1q thus inhibiting C1; may perform the receptor function through a complex with C1qR/CD93. In complex with cytokeratin-1/KRT1 is a high affinity receptor for kininogen-1/HMWK. Can also bind other plasma proteins, such as coagulation factor XII leading to its autoactivation. May function to bind initially fluid kininogen-1 to the cell membrane. The secreted form may enhance both extrinsic and intrinsic coagulation pathways. It is postulated that the cell surface form requires docking with transmembrane proteins for downstream signaling which might be specific for a cell-type or response. By acting as C1q receptor is involved in chemotaxis of immature dendritic cells and neutrophils and is proposed to signal through CD209/DC-SIGN on immature dendritic cells, through integrin alpha-4/beta-1 during trophoblast invasion of the decidua, and through integrin beta-1 during endothelial cell adhesion and spreading. Signaling involved in inhibition of innate immune response is implicating the PI3K-AKT/PKB pathway. Required for protein synthesis in mitochondria. In mitochondrial translation may be involved in formation of functional 55S mitoribosomes; the function seems to involve its RNA-binding activity. Acts as a RNA modification reader, which specifically recognizes and binds mitochondrial RNAs modified by C5-methylcytosine (m5C) in response to stress, and promotes recruitment of the mitochondrial degradosome complex, leading to their degradation. May be involved in the nucleolar ribosome maturation process; the function may involve the exchange of FBL for RRP1 in the association with pre-ribosome particles. Involved in regulation of RNA splicing by inhibiting the RNA-binding capacity of SRSF1 and its phosphorylation. Is required for the nuclear translocation of splicing factor U2AF1L4. Involved in regulation of CDKN2A- and HRK-mediated apoptosis. Stabilizes mitochondrial CDKN2A isoform smARF. May be involved in regulation of FOXC1 transcriptional activity and NFY/CCAAT-binding factor complex-mediated transcription. May play a role in antibacterial defense as it can bind to cell surface hyaluronan and inhibit Streptococcus pneumoniae hyaluronate lyase. May be involved in modulation of the immune response; ligation by HCV core protein is resulting in suppression of interleukin-12 production in monocyte-derived dendritic cells. Involved in regulation of antiviral response by inhibiting RIGI- and IFIH1-mediated signaling pathways probably involving its association with MAVS after viral infection. Acts as a regulator of DNA repair via homologous recombination by inhibiting the activity of MRE11: interacts with unphosphorylated MRE11 and RAD50 in absence of DNA damage, preventing formation and activity of the MRN complex. Following DNA damage, dissociates from phosphorylated MRE11, allowing formation of the MRN complex. The protein is Complement component 1 Q subcomponent-binding protein, mitochondrial (C1qbp) of Rattus norvegicus (Rat).